We begin with the raw amino-acid sequence, 446 residues long: Probable glycine dehydrogenase (decarboxylating) subunit 1 (446 aa).

It belongs to the GcvP family. N-terminal subunit subfamily. As to quaternary structure, the glycine cleavage system is composed of four proteins: P, T, L and H. In this organism, the P 'protein' is a heterodimer of two subunits.

The catalysed reaction is N(6)-[(R)-lipoyl]-L-lysyl-[glycine-cleavage complex H protein] + glycine + H(+) = N(6)-[(R)-S(8)-aminomethyldihydrolipoyl]-L-lysyl-[glycine-cleavage complex H protein] + CO2. Functionally, the glycine cleavage system catalyzes the degradation of glycine. The P protein binds the alpha-amino group of glycine through its pyridoxal phosphate cofactor; CO(2) is released and the remaining methylamine moiety is then transferred to the lipoamide cofactor of the H protein. In Thermococcus onnurineus (strain NA1), this protein is Probable glycine dehydrogenase (decarboxylating) subunit 1.